Here is a 537-residue protein sequence, read N- to C-terminus: Methylmalonate-semialdehyde/malonate-semialdehyde dehydrogenase [acylating], mitochondrial (537 aa).

The transit peptide at 1-34 (MAAVAVAAAAAALRARILQVSSKVNSSWQPASSF) directs the protein to the mitochondrion. Lysine 49, lysine 54, lysine 57, and lysine 78 each carry N6-acetyllysine; alternate. N6-succinyllysine; alternate occurs at positions 49, 54, 57, and 78. Lysine 89 bears the N6-acetyllysine mark. Lysine 119 and lysine 131 each carry N6-acetyllysine; alternate. An N6-succinyllysine; alternate mark is found at lysine 119 and lysine 131. Residues alanine 185, phenylalanine 187, lysine 211, glutamate 214, arginine 215, and serine 264 each contribute to the NAD(+) site. Phosphoserine is present on serine 264. Lysine 300 is modified (N6-acetyllysine). Cysteine 319 (nucleophile) is an active-site residue. Residues lysine 332 and lysine 333 each carry the N6-acetyllysine modification. An N6-acetyllysine; alternate mark is found at lysine 366 and lysine 378. An N6-succinyllysine; alternate mark is found at lysine 366 and lysine 378. Position 382 is a phosphoserine (serine 382). At lysine 393 the chain carries N6-succinyllysine. Glutamate 419 contacts NAD(+). Lysine 502 carries the N6-acetyllysine modification. Lysine 519 is subject to N6-succinyllysine.

Belongs to the aldehyde dehydrogenase family. Homodimer. In terms of processing, the N-terminus is blocked.

The protein resides in the mitochondrion. The enzyme catalyses 2-methyl-3-oxopropanoate + NAD(+) + CoA + H2O = propanoyl-CoA + hydrogencarbonate + NADH + H(+). The catalysed reaction is 3-oxopropanoate + NAD(+) + CoA + H2O = hydrogencarbonate + acetyl-CoA + NADH + H(+). It catalyses the reaction (R)-2-methyl-3-oxopropanoate + NAD(+) + CoA + H2O = propanoyl-CoA + hydrogencarbonate + NADH + H(+). It carries out the reaction (S)-2-methyl-3-oxopropanoate + NAD(+) + CoA + H2O = propanoyl-CoA + hydrogencarbonate + NADH + H(+). In terms of biological role, malonate and methylmalonate semialdehyde dehydrogenase involved in the catabolism of valine, thymine, and compounds catabolized by way of beta-alanine, including uracil and cytidine. The sequence is that of Methylmalonate-semialdehyde/malonate-semialdehyde dehydrogenase [acylating], mitochondrial (ALDH6A1) from Bos taurus (Bovine).